A 1902-amino-acid chain; its full sequence is PII-type proteinase (1902 aa).

A signal peptide spans 1–33 (MQRKKKGLSILLAGTVALGALAVLPVGEIQAKA). The propeptide occupies 34–187 (AISQQTKGSS…VTLAKVYYPT (154 aa)). Residues 191-697 (ANSMANVQAV…AGLVDVKAAI (507 aa)) enclose the Peptidase S8 domain. Active-site charge relay system residues include Asp217, His281, and Ser620. A disordered region spans residues 1796-1874 (GKGDGTTGTS…GALPKTGETT (79 aa)). Residues 1797–1812 (KGDGTTGTSDKGGGQG) show a composition bias toward gly residues. Over residues 1830–1843 (SQPSSGGNIPTNPA) the composition is skewed to polar residues. The LPXTG sorting signal motif lies at 1867 to 1871 (LPKTG). Thr1870 is subject to Pentaglycyl murein peptidoglycan amidated threonine. Residues 1871–1902 (GETTERPAFGFLGVIVVSLMGVLGLKRKQREE) constitute a propeptide, removed by sortase.

It belongs to the peptidase S8 family.

The protein localises to the secreted. It is found in the cell wall. The enzyme catalyses Endopeptidase activity with very broad specificity, although some subsite preference have been noted, e.g. large hydrophobic residues in the P1 and P4 positions, and Pro in the P2 position. Best known for its action on caseins, although it has been shown to hydrolyze hemoglobin and oxidized insulin B-chain.. Protease which breaks down milk proteins during the growth of the bacteria on milk. The chain is PII-type proteinase (prt) from Lactococcus lactis subsp. cremoris (Streptococcus cremoris).